The chain runs to 453 residues: Ras association domain-containing protein 10 (453 aa).

One can recognise a Ras-associating domain in the interval 1-107 (MENEEWKVSV…VKFVLVRSEA (107 aa)). Residues 262–295 (QKCDEVLLLQEQISRQEEAMEQMTVQIQEELNKR) are a coiled coil. Residues 299–310 (RRQEELSSKEQE) show a composition bias toward basic and acidic residues. Disordered regions lie at residues 299 to 322 (RRQE…DQGG) and 402 to 453 (GVTT…ESLV). 2 stretches are compositionally biased toward polar residues: residues 402 to 411 (GVTTTGSPTD) and 433 to 444 (TGLSSMHSQDSD).

The protein localises to the cytoplasm. Its subcellular location is the cytosol. It localises to the cytoskeleton. It is found in the microtubule organizing center. The protein resides in the centrosome. The protein localises to the spindle pole. Its function is as follows. May play role in regulating embryonic neurogenesis. The polypeptide is Ras association domain-containing protein 10 (rassf10) (Xenopus laevis (African clawed frog)).